We begin with the raw amino-acid sequence, 383 residues long: 6-hydroxynicotinate 3-monooxygenase (383 aa).

The signal sequence occupies residues 1–26 (MQGKPRIAVIGAGLGGTAGAALMARA). FAD is bound by residues Gly15, 34-35 (EQ), His47, Arg108, and Leu130. His47 (proton acceptor) is an active-site residue. Catalysis depends on Tyr214, which acts as the Proton acceptor. FAD contacts are provided by residues Asp293 and 306–307 (AA).

Belongs to the 6-hydroxynicotinate 3-monooxygenase family. As to quaternary structure, monomer. FAD is required as a cofactor.

It carries out the reaction 6-hydroxynicotinate + NADH + O2 + 2 H(+) = 2,5-dihydroxypyridine + CO2 + NAD(+) + H2O. The protein operates within cofactor degradation; nicotinate degradation. With respect to regulation, competitively inhibited by 6-hydroxynicotinaldehyde. Flavin-dependent monooxygenase (FMO) that catalyzes the decarboxylative hydroxylation of 6-hydroxynicotinic acid (6-HNA) to 2,5-dihydroxypyridine (2,5-DHP) with concomitant oxidation of NADH, a step in the aerobic nicotinate degradation pathway. Is also active on the non-natural substrate 5-chloro-6-hydroxynicotinate, and is much less efficient on the substrate analog 4-hydroxybenzoate. The chain is 6-hydroxynicotinate 3-monooxygenase from Bordetella bronchiseptica (strain ATCC BAA-588 / NCTC 13252 / RB50) (Alcaligenes bronchisepticus).